Consider the following 97-residue polypeptide: Co-chaperonin GroES (97 aa).

It belongs to the GroES chaperonin family. Heptamer of 7 subunits arranged in a ring. Interacts with the chaperonin GroEL.

Its subcellular location is the cytoplasm. Functionally, together with the chaperonin GroEL, plays an essential role in assisting protein folding. The GroEL-GroES system forms a nano-cage that allows encapsulation of the non-native substrate proteins and provides a physical environment optimized to promote and accelerate protein folding. GroES binds to the apical surface of the GroEL ring, thereby capping the opening of the GroEL channel. In Salmonella agona (strain SL483), this protein is Co-chaperonin GroES.